A 606-amino-acid polypeptide reads, in one-letter code: EPM2A-interacting protein 1 (606 aa).

Ser147 is modified (phosphoserine).

As to quaternary structure, interacts with EPM2A.

The protein localises to the endoplasmic reticulum. The polypeptide is EPM2A-interacting protein 1 (Epm2aip1) (Mus musculus (Mouse)).